The chain runs to 338 residues: Flap endonuclease 1 (338 aa).

An N-domain region spans residues Met1 to Arg98. Residues Asp27, Asp80, Glu152, Glu154, Asp173, Asp175, and Asp236 each coordinate Mg(2+). Residues Ala116 to Gly257 form an I-domain region. The interval Arg330 to Phe338 is interaction with PCNA.

This sequence belongs to the XPG/RAD2 endonuclease family. FEN1 subfamily. Interacts with PCNA. PCNA stimulates the nuclease activity without altering cleavage specificity. Mg(2+) serves as cofactor.

In terms of biological role, structure-specific nuclease with 5'-flap endonuclease and 5'-3' exonuclease activities involved in DNA replication and repair. During DNA replication, cleaves the 5'-overhanging flap structure that is generated by displacement synthesis when DNA polymerase encounters the 5'-end of a downstream Okazaki fragment. Binds the unpaired 3'-DNA end and kinks the DNA to facilitate 5' cleavage specificity. Cleaves one nucleotide into the double-stranded DNA from the junction in flap DNA, leaving a nick for ligation. Also involved in the base excision repair (BER) pathway. Acts as a genome stabilization factor that prevents flaps from equilibrating into structures that lead to duplications and deletions. Also possesses 5'-3' exonuclease activity on nicked or gapped double-stranded DNA. The sequence is that of Flap endonuclease 1 from Methanosarcina barkeri (strain Fusaro / DSM 804).